Reading from the N-terminus, the 89-residue chain is Small ribosomal subunit protein uS15 (89 aa).

Belongs to the universal ribosomal protein uS15 family. Part of the 30S ribosomal subunit. Forms a bridge to the 50S subunit in the 70S ribosome, contacting the 23S rRNA.

Its function is as follows. One of the primary rRNA binding proteins, it binds directly to 16S rRNA where it helps nucleate assembly of the platform of the 30S subunit by binding and bridging several RNA helices of the 16S rRNA. In terms of biological role, forms an intersubunit bridge (bridge B4) with the 23S rRNA of the 50S subunit in the ribosome. The protein is Small ribosomal subunit protein uS15 of Shewanella baltica (strain OS223).